The chain runs to 263 residues: S-acyl fatty acid synthase thioesterase, medium chain (263 aa).

M1 bears the N-acetylmethionine mark. Catalysis depends on residues S101 and H237. Residues 262-263 are important for interaction with FASN; sequence LT.

The protein belongs to the thioesterase family. As to quaternary structure, interacts (via C-terminus) with FASN.

The protein resides in the cytoplasm. The protein localises to the cytosol. It catalyses the reaction (9Z)-octadecenoyl-[ACP] + H2O = (9Z)-octadecenoate + holo-[ACP] + H(+). The enzyme catalyses decanoyl-CoA + H2O = decanoate + CoA + H(+). The catalysed reaction is dodecanoyl-CoA + H2O = dodecanoate + CoA + H(+). It carries out the reaction tetradecanoyl-CoA + H2O = tetradecanoate + CoA + H(+). It catalyses the reaction hexadecanoyl-CoA + H2O = hexadecanoate + CoA + H(+). In terms of biological role, contributes to the release of free fatty acids from fatty acid synthase (FASN). Has broad substrate specificity, giving rise to a range of free fatty acids with chain lengths between 10 and 16 carbon atoms (C10 - C16). The protein is S-acyl fatty acid synthase thioesterase, medium chain of Rattus norvegicus (Rat).